A 371-amino-acid chain; its full sequence is MPFLPEPLFQHGQPDRTAILLVNLGTPDGTSPREVGRYLRQFLSDPRVVEIPRAVWWFILNVLIVPLRSRASAHKYESIWLREANMTGSPLLVYSERQAHALQQLLNAQGHDVVVACAMRYGNPSIPSVMQALRKQGVERILVLPMYPQYSGTTTATAFDEVFRVLGEMRNQPELRLVKHFHDDPAYINALHQQVGAYWAQHGAPDFAHGDKLVLSFHGVPRRTLELGDPYHCECLKTGRLLGEALGLQPGQYLVTFQSRFGRAEWLQPYTAPTLEELGRVGTNRVDVFCPGFPADCLETLEEIAMEGQSTFRVAGGKEFHYIPCLNDSEAWIAGIADIALAHLQGWPLTLTHPHVLEASRTRAQSKGAAA.

The Fe cation site is built by H218 and E299.

It belongs to the ferrochelatase family.

It is found in the cytoplasm. It catalyses the reaction heme b + 2 H(+) = protoporphyrin IX + Fe(2+). The protein operates within porphyrin-containing compound metabolism; protoheme biosynthesis; protoheme from protoporphyrin-IX: step 1/1. Functionally, catalyzes the ferrous insertion into protoporphyrin IX. The protein is Ferrochelatase of Ralstonia pickettii (strain 12J).